A 523-amino-acid polypeptide reads, in one-letter code: Calcium-dependent protein kinase 34 (523 aa).

The disordered stretch occupies residues 1–60 (MGNCCSHGRDSDDNKEEPRPENGGGGVGAAEASVRASKHPPASPPPATKQGPIGPVLGRP). Glycine 2 carries N-myristoyl glycine lipidation. Positions 7-20 (HGRDSDDNKEEPRP) are enriched in basic and acidic residues. In terms of domain architecture, Protein kinase spans 68–326 (YTLGKELGRG…AAQVLNHPWI (259 aa)). Residues 74 to 82 (LGRGQFGVT) and lysine 97 each bind ATP. The active-site Proton acceptor is the aspartate 192. Serine 232 carries the phosphoserine modification. An autoinhibitory domain region spans residues 332-362 (APDVPLDNAVMSRLKQFKAMNNFKKVALRVI). 4 consecutive EF-hand domains span residues 369 to 404 (EEIM…QGTR), 405 to 440 (LSEY…INRL), 441 to 476 (DREE…FGMN), and 480 to 511 (DIKE…GNPD). Positions 382, 384, 386, 388, 393, 418, 420, 422, 424, 429, 454, 456, 458, 460, 465, 489, 491, 493, 495, and 500 each coordinate Ca(2+).

It belongs to the protein kinase superfamily. Ser/Thr protein kinase family. CDPK subfamily.

It localises to the membrane. The enzyme catalyses L-seryl-[protein] + ATP = O-phospho-L-seryl-[protein] + ADP + H(+). It catalyses the reaction L-threonyl-[protein] + ATP = O-phospho-L-threonyl-[protein] + ADP + H(+). Activated by calcium. Autophosphorylation may play an important role in the regulation of the kinase activity. In terms of biological role, may play a role in signal transduction pathways that involve calcium as a second messenger. This is Calcium-dependent protein kinase 34 (CPK34) from Arabidopsis thaliana (Mouse-ear cress).